Here is a 1359-residue protein sequence, read N- to C-terminus: DNA-directed RNA polymerase subunit beta (1359 aa).

This sequence belongs to the RNA polymerase beta chain family. In terms of assembly, the RNAP catalytic core consists of 2 alpha, 1 beta, 1 beta' and 1 omega subunit. When a sigma factor is associated with the core the holoenzyme is formed, which can initiate transcription.

The enzyme catalyses RNA(n) + a ribonucleoside 5'-triphosphate = RNA(n+1) + diphosphate. DNA-dependent RNA polymerase catalyzes the transcription of DNA into RNA using the four ribonucleoside triphosphates as substrates. In Nitrosococcus oceani (strain ATCC 19707 / BCRC 17464 / JCM 30415 / NCIMB 11848 / C-107), this protein is DNA-directed RNA polymerase subunit beta.